Here is a 1064-residue protein sequence, read N- to C-terminus: Carbamoyl phosphate synthase large chain (1064 aa).

The interval 1–401 (MPKRNDIKKI…SLLKAVRSLE (401 aa)) is carboxyphosphate synthetic domain. Residues Arg129, Arg169, Gly175, Gly176, Glu208, Ile210, Glu215, Gly241, Val242, His243, Gln284, and Glu298 each contribute to the ATP site. In terms of domain architecture, ATP-grasp 1 spans 133–327 (KELCESINEP…IAKMSAKIAI (195 aa)). 3 residues coordinate Mg(2+): Gln284, Glu298, and Asn300. Gln284, Glu298, and Asn300 together coordinate Mn(2+). The tract at residues 402–546 (IGVFHNEMTE…YSTYEWENES (145 aa)) is oligomerization domain. A carbamoyl phosphate synthetic domain region spans residues 547–929 (KRSDKEKIIV…ALYKSFEAAK (383 aa)). One can recognise an ATP-grasp 2 domain in the interval 671–861 (EKALQDLDIP…MAQLATQMIL (191 aa)). Residues Arg707, Ser746, Leu748, Glu752, Gly777, Val778, His779, Ser780, Gln820, and Glu832 each coordinate ATP. Gln820, Glu832, and Asn834 together coordinate Mg(2+). Gln820, Glu832, and Asn834 together coordinate Mn(2+). The MGS-like domain occupies 930 to 1064 (LHMADYGSVL…QSRSFTTKNI (135 aa)). An allosteric domain region spans residues 930–1064 (LHMADYGSVL…QSRSFTTKNI (135 aa)).

It belongs to the CarB family. Composed of two chains; the small (or glutamine) chain promotes the hydrolysis of glutamine to ammonia, which is used by the large (or ammonia) chain to synthesize carbamoyl phosphate. Tetramer of heterodimers (alpha,beta)4. Mg(2+) is required as a cofactor. It depends on Mn(2+) as a cofactor.

The enzyme catalyses hydrogencarbonate + L-glutamine + 2 ATP + H2O = carbamoyl phosphate + L-glutamate + 2 ADP + phosphate + 2 H(+). It catalyses the reaction hydrogencarbonate + NH4(+) + 2 ATP = carbamoyl phosphate + 2 ADP + phosphate + 2 H(+). It functions in the pathway amino-acid biosynthesis; L-arginine biosynthesis; carbamoyl phosphate from bicarbonate: step 1/1. It participates in pyrimidine metabolism; UMP biosynthesis via de novo pathway; (S)-dihydroorotate from bicarbonate: step 1/3. Functionally, large subunit of the glutamine-dependent carbamoyl phosphate synthetase (CPSase). CPSase catalyzes the formation of carbamoyl phosphate from the ammonia moiety of glutamine, carbonate, and phosphate donated by ATP, constituting the first step of 2 biosynthetic pathways, one leading to arginine and/or urea and the other to pyrimidine nucleotides. The large subunit (synthetase) binds the substrates ammonia (free or transferred from glutamine from the small subunit), hydrogencarbonate and ATP and carries out an ATP-coupled ligase reaction, activating hydrogencarbonate by forming carboxy phosphate which reacts with ammonia to form carbamoyl phosphate. The chain is Carbamoyl phosphate synthase large chain from Lactococcus lactis subsp. cremoris (strain MG1363).